The chain runs to 372 residues: Ligninase LG6 (372 aa).

The N-terminal stretch at 1-21 is a signal peptide; sequence MALKQLAAAVALALSIQAAQG. A propeptide spanning residues 22–28 is cleaved from the precursor; that stretch reads AAVKEKR. Intrachain disulfides connect Cys-31/Cys-43 and Cys-62/Cys-148. His-75 (proton acceptor) is an active-site residue. The Ca(2+) site is built by Asp-76, Gly-94, Asp-96, and Ser-98. Position 204 (His-204) interacts with heme b. Residues Ser-205, Asp-222, Thr-224, Val-227, and Asp-229 each contribute to the Ca(2+) site. A disulfide bridge links Cys-277 with Cys-345. The N-linked (GlcNAc...) asparagine glycan is linked to Asn-285. The segment covering 352 to 361 has biased composition (low complexity); that stretch reads TLTTLPGPET. Residues 352-372 form a disordered region; the sequence is TLTTLPGPETSVQRIQPPPGA.

The protein belongs to the peroxidase family. Ligninase subfamily. Heme b is required as a cofactor. It depends on Ca(2+) as a cofactor.

The catalysed reaction is 1-(3,4-dimethoxyphenyl)-2-(2-methoxyphenoxy)propane-1,3-diol + H2O2 = 3,4-dimethoxybenzaldehyde + guaiacol + glycolaldehyde + H2O. It catalyses the reaction 2 (3,4-dimethoxyphenyl)methanol + H2O2 = 2 (3,4-dimethoxyphenyl)methanol radical + 2 H2O. The protein operates within secondary metabolite metabolism; lignin degradation. Functionally, depolymerization of lignin. Catalyzes the C(alpha)-C(beta) cleavage of the propyl side chains of lignin. This is Ligninase LG6 (GLG6) from Phanerodontia chrysosporium (White-rot fungus).